The following is a 150-amino-acid chain: Large ribosomal subunit protein bL9 (150 aa).

Belongs to the bacterial ribosomal protein bL9 family.

In terms of biological role, binds to the 23S rRNA. The polypeptide is Large ribosomal subunit protein bL9 (Ralstonia nicotianae (strain ATCC BAA-1114 / GMI1000) (Ralstonia solanacearum)).